We begin with the raw amino-acid sequence, 245 residues long: 23S rRNA (guanosine-2'-O-)-methyltransferase RlmB (245 aa).

S-adenosyl-L-methionine contacts are provided by glycine 197, isoleucine 217, and leucine 226.

Belongs to the class IV-like SAM-binding methyltransferase superfamily. RNA methyltransferase TrmH family. RlmB subfamily.

Its subcellular location is the cytoplasm. The enzyme catalyses guanosine(2251) in 23S rRNA + S-adenosyl-L-methionine = 2'-O-methylguanosine(2251) in 23S rRNA + S-adenosyl-L-homocysteine + H(+). In terms of biological role, specifically methylates the ribose of guanosine 2251 in 23S rRNA. This is 23S rRNA (guanosine-2'-O-)-methyltransferase RlmB from Photobacterium profundum (strain SS9).